Here is a 153-residue protein sequence, read N- to C-terminus: UPF0756 membrane protein lmo1568 (153 aa).

A run of 4 helical transmembrane segments spans residues 6–26 (MLFL…SLII), 54–74 (WGVT…QIGF), 80–100 (SFKS…SILA), and 117–137 (LVFG…GPVI).

It belongs to the UPF0756 family.

Its subcellular location is the cell membrane. This chain is UPF0756 membrane protein lmo1568, found in Listeria monocytogenes serovar 1/2a (strain ATCC BAA-679 / EGD-e).